We begin with the raw amino-acid sequence, 124 residues long: Small ribosomal subunit protein uS12 (124 aa).

Aspartate 89 bears the 3-methylthioaspartic acid mark.

The protein belongs to the universal ribosomal protein uS12 family. In terms of assembly, part of the 30S ribosomal subunit. Contacts proteins S8 and S17. May interact with IF1 in the 30S initiation complex.

In terms of biological role, with S4 and S5 plays an important role in translational accuracy. Functionally, interacts with and stabilizes bases of the 16S rRNA that are involved in tRNA selection in the A site and with the mRNA backbone. Located at the interface of the 30S and 50S subunits, it traverses the body of the 30S subunit contacting proteins on the other side and probably holding the rRNA structure together. The combined cluster of proteins S8, S12 and S17 appears to hold together the shoulder and platform of the 30S subunit. The protein is Small ribosomal subunit protein uS12 of Pasteurella multocida (strain Pm70).